A 314-amino-acid polypeptide reads, in one-letter code: O-antigen chain rhamnosyltransferase RfbN (314 aa).

The protein belongs to the glycosyltransferase 2 family.

The enzyme catalyses alpha-D-galactosyl-di-trans,octa-cis-undecaprenyl diphosphate + dTDP-beta-L-rhamnose = alpha-L-rhamnosyl-(1-&gt;3)-alpha-D-galactosyl-1-diphospho-di-trans,octa-cis-undecaprenol + dTDP + H(+). It participates in bacterial outer membrane biogenesis; LPS O-antigen biosynthesis. Its function is as follows. Rhamnosyltransferase involved in the biosynthesis of the repeat unit of the lipopolysaccharide (LPS) O-antigen region. Catalyzes the addition of a rhamnose to the galactosyl-undecaprenyl diphosphate intermediate. This is O-antigen chain rhamnosyltransferase RfbN from Salmonella typhimurium (strain LT2 / SGSC1412 / ATCC 700720).